The sequence spans 349 residues: Ribosomal RNA large subunit methyltransferase M (349 aa).

S-adenosyl-L-methionine contacts are provided by residues Ser-183, Ala-216 to Gly-219, Asp-235, Asp-255, and Asp-271. Lys-300 acts as the Proton acceptor in catalysis.

It belongs to the class I-like SAM-binding methyltransferase superfamily. RNA methyltransferase RlmE family. RlmM subfamily. Monomer.

The protein localises to the cytoplasm. It catalyses the reaction cytidine(2498) in 23S rRNA + S-adenosyl-L-methionine = 2'-O-methylcytidine(2498) in 23S rRNA + S-adenosyl-L-homocysteine + H(+). Its function is as follows. Catalyzes the 2'-O-methylation at nucleotide C2498 in 23S rRNA. The protein is Ribosomal RNA large subunit methyltransferase M of Stutzerimonas stutzeri (strain A1501) (Pseudomonas stutzeri).